The primary structure comprises 341 residues: S-adenosylmethionine:tRNA ribosyltransferase-isomerase (341 aa).

The protein belongs to the QueA family. In terms of assembly, monomer.

The protein resides in the cytoplasm. It catalyses the reaction 7-aminomethyl-7-carbaguanosine(34) in tRNA + S-adenosyl-L-methionine = epoxyqueuosine(34) in tRNA + adenine + L-methionine + 2 H(+). It functions in the pathway tRNA modification; tRNA-queuosine biosynthesis. Transfers and isomerizes the ribose moiety from AdoMet to the 7-aminomethyl group of 7-deazaguanine (preQ1-tRNA) to give epoxyqueuosine (oQ-tRNA). This chain is S-adenosylmethionine:tRNA ribosyltransferase-isomerase, found in Halothermothrix orenii (strain H 168 / OCM 544 / DSM 9562).